A 140-amino-acid chain; its full sequence is Large ribosomal subunit protein uL11 (140 aa).

The protein belongs to the universal ribosomal protein uL11 family. In terms of assembly, part of the ribosomal stalk of the 50S ribosomal subunit. Interacts with L10 and the large rRNA to form the base of the stalk. L10 forms an elongated spine to which L12 dimers bind in a sequential fashion forming a multimeric L10(L12)X complex. In terms of processing, one or more lysine residues are methylated.

Its function is as follows. Forms part of the ribosomal stalk which helps the ribosome interact with GTP-bound translation factors. The chain is Large ribosomal subunit protein uL11 from Desulfatibacillum aliphaticivorans.